The primary structure comprises 685 residues: Methionine--tRNA ligase (685 aa).

Residues 12-22 (PYANGSIHLGH) carry the 'HIGH' region motif. 4 residues coordinate Zn(2+): C143, C146, C156, and C159. The 'KMSKS' region motif lies at 339–343 (KMSKS). K342 contributes to the ATP binding site. One can recognise a tRNA-binding domain in the interval 582-685 (DFMKIDMRVA…AGAQPGDKVG (104 aa)).

The protein belongs to the class-I aminoacyl-tRNA synthetase family. MetG type 1 subfamily. As to quaternary structure, homodimer. Zn(2+) is required as a cofactor.

It localises to the cytoplasm. It carries out the reaction tRNA(Met) + L-methionine + ATP = L-methionyl-tRNA(Met) + AMP + diphosphate. Functionally, is required not only for elongation of protein synthesis but also for the initiation of all mRNA translation through initiator tRNA(fMet) aminoacylation. In Neisseria meningitidis serogroup A / serotype 4A (strain DSM 15465 / Z2491), this protein is Methionine--tRNA ligase.